A 126-amino-acid polypeptide reads, in one-letter code: Interleukin-18-binding protein (126 aa).

Residues 1–16 (MRILFLIAFMYGCVHS) form the signal peptide.

This sequence belongs to the orthopoxvirus OPG022 family.

The protein localises to the secreted. Functionally, soluble IL18-binding protein that may modulate the host antiviral response. This chain is Interleukin-18-binding protein (OPG022), found in Cynomys gunnisoni (Gunnison's prairie dog).